The sequence spans 292 residues: Phosphatidylserine decarboxylase proenzyme (292 aa).

Active-site charge relay system; for autoendoproteolytic cleavage activity residues include Asp-92, His-149, and Ser-255. Ser-255 serves as the catalytic Schiff-base intermediate with substrate; via pyruvic acid; for decarboxylase activity. Ser-255 is subject to Pyruvic acid (Ser); by autocatalysis.

This sequence belongs to the phosphatidylserine decarboxylase family. PSD-B subfamily. Prokaryotic type I sub-subfamily. As to quaternary structure, heterodimer of a large membrane-associated beta subunit and a small pyruvoyl-containing alpha subunit. Pyruvate serves as cofactor. Post-translationally, is synthesized initially as an inactive proenzyme. Formation of the active enzyme involves a self-maturation process in which the active site pyruvoyl group is generated from an internal serine residue via an autocatalytic post-translational modification. Two non-identical subunits are generated from the proenzyme in this reaction, and the pyruvate is formed at the N-terminus of the alpha chain, which is derived from the carboxyl end of the proenzyme. The autoendoproteolytic cleavage occurs by a canonical serine protease mechanism, in which the side chain hydroxyl group of the serine supplies its oxygen atom to form the C-terminus of the beta chain, while the remainder of the serine residue undergoes an oxidative deamination to produce ammonia and the pyruvoyl prosthetic group on the alpha chain. During this reaction, the Ser that is part of the protease active site of the proenzyme becomes the pyruvoyl prosthetic group, which constitutes an essential element of the active site of the mature decarboxylase.

The protein localises to the cell membrane. It catalyses the reaction a 1,2-diacyl-sn-glycero-3-phospho-L-serine + H(+) = a 1,2-diacyl-sn-glycero-3-phosphoethanolamine + CO2. It participates in phospholipid metabolism; phosphatidylethanolamine biosynthesis; phosphatidylethanolamine from CDP-diacylglycerol: step 2/2. In terms of biological role, catalyzes the formation of phosphatidylethanolamine (PtdEtn) from phosphatidylserine (PtdSer). The sequence is that of Phosphatidylserine decarboxylase proenzyme from Idiomarina loihiensis (strain ATCC BAA-735 / DSM 15497 / L2-TR).